Consider the following 235-residue polypeptide: Type II secretion system protein N (235 aa).

Residues 1–34 (MIPRRSSDITIKTRSDVLPFSGASSRWLQRYAPA) are Cytoplasmic-facing. A helical; Signal-anchor for type II membrane protein membrane pass occupies residues 35–55 (LLAVALIIAMSISLAWQAAGW). The Periplasmic segment spans residues 56–235 (LRLQRSPVAV…EPTTTPTESD (180 aa)). The tract at residues 205–235 (DALRQQMEATPIAEPAEEDSSEPTTTPTESD) is disordered. The span at 226-235 (EPTTTPTESD) shows a compositional bias: low complexity.

The protein resides in the cell inner membrane. Involved in a type II secretion system (T2SS, formerly general secretion pathway, GSP) for the export of proteins. Required for the translocation of a variety of enzymes across the outer membrane. This chain is Type II secretion system protein N (xcpP), found in Pseudomonas aeruginosa (strain ATCC 15692 / DSM 22644 / CIP 104116 / JCM 14847 / LMG 12228 / 1C / PRS 101 / PAO1).